The sequence spans 64 residues: Conotoxin Cal6.24 (64 aa).

The first 22 residues, Met1–Ser22, serve as a signal peptide directing secretion. Cystine bridges form between Cys32–Cys50, Cys40–Cys54, and Cys49–Cys60.

In terms of tissue distribution, expressed by the venom duct.

The protein resides in the secreted. Its function is as follows. Probable neurotoxin. The protein is Conotoxin Cal6.24 of Californiconus californicus (California cone).